A 1372-amino-acid polypeptide reads, in one-letter code: MNKVYSLKYCPVTGGLIAVSELARRVIKKTCRRLTHILLAGIPAICLCYSQISQAGIVRSDIAYQIYRDFAENKGLFVPGANDIPVYDKDGKLVGRLGKAPMADFSSVSSNGVATLVSPQYIVSVKHNGGYRSVSFGNGKNTYSLVDRNNHPSIDFHAPRLNKLVTEVIPSAVTSEGTKANAYKYTERYTAFYRVGSGTQYTKDKDGNLVKVAGGYAFKTGGTTGVPLISDATIVSNPGQTYNPVNGPLPDYGAPGDSGSPLFAYDKQQKKWVIVAVLRAYAGINGATNWWNVIPTDYLNQVMQDDFDAPVDFVSGLGPLNWTYDKTSGTGTLSQGSKNWTMHGQKDNDLNAGKNLVFSGQNGAIILKDSVTQGAGYLEFKDSYTVSAESGKTWTGAGIITDKGTNVTWKVNGVAGDNLHKLGEGTLTINGTGVNPGGLKTGDGIVVLNQQADTAGNIQAFSSVNLASGRPTVVLGDARQVNPDNISWGYRGGKLDLNGNAVTFTRLQAADYGAVITNNAQQKSQLLLDLKAQDTNVSEPTIGNISPFGGTGTPGNLYSMILNSQTRFYILKSASYGNTLWGNSLNDPAQWEFVGMDKNKAVQTVKDRILAGRAKQPVIFHGQLTGNMDVAIPQVPGGRKVIFDGSVNLPEGTLSQDSGTLIFQGHPVIHASISGSAPVSLNQKDWENRQFTMKTLSLKDADFHLSRNASLNSDIKSDNSHITLGSDRAFVDKNDGTGNYVIPEEGTSVPDTVNDRSQYEGNITLNHNSALDIGSRFTGGIDAYDSAVSITSPDVLLTAPGAFAGSSLTVHDGGHLTALNGLFSDGHIQAGKNGKITLSGTPVKDTANQYAPAVYLTDGYDLTGDNAALEITRGAHASGDIHASAASTVTIGSDTPAELASAETAASAFAGSLLEGYNAAFNGAITGGRADVSMHNALWTLGGDSAIHSLTVRNSRISSEGDRTFRTLTVNKLDATGSDFVLRTDLKNADKINVTEKATGSDNSLNVSFMNNPAQGQALNIPLVTAPAGTSAEMFKAGTRVTGFSRVTPTLHVDTSGGNTKWILDGFKAEADKAAAAKADSFMNAGYKNFMTEVNNLNKRMGDLRDTNGDAGAWARIMSGAGSADGGYSDNYTHVQVGFDKKHELDGVDLFTGVTMTYTDSSADSHAFSGKTKSVGGGLYASALFESGAYIDLIGKYIHHDNDYTGNFASLGTKHYNTHSWYAGAETGYRYHLTEDTFIEPQAELVYGAVSGKTFRWKDGDMDLSMKNRDFSPLVGRTGVELGKTFSGKDWSVTARAGTSWQFDLLNNGETVLRDASGEKRIKGEKDSRMLFNVGMNAQIKDNMRFGLEFEKSAFGKYNVDNAVNANFRYMF.

The first 55 residues, 1–55 (MNKVYSLKYCPVTGGLIAVSELARRVIKKTCRRLTHILLAGIPAICLCYSQISQA), serve as a signal peptide directing secretion. One can recognise a Peptidase S6 domain in the interval 56–301 (GIVRSDIAYQ…NVIPTDYLNQ (246 aa)). Catalysis depends on charge relay system residues His127, Asp155, and Ser258. One can recognise an Autotransporter domain in the interval 1106-1372 (DTNGDAGAWA…AVNANFRYMF (267 aa)).

Cleaved to release the mature protein from the outer membrane.

The protein resides in the periplasm. Its subcellular location is the secreted. It localises to the cell surface. It is found in the cell outer membrane. Involved in intestinal colonization, displays in vitro mucinolytic activity, serum resistance, and hemagglutination. Important to penetrate the intestinal mucus layer. The polypeptide is Serine protease pic autotransporter (pic) (Escherichia coli O44:H18 (strain 042 / EAEC)).